Here is a 186-residue protein sequence, read N- to C-terminus: Threonylcarbamoyl-AMP synthase (186 aa).

One can recognise a YrdC-like domain in the interval 5–186 (LLTIKAAAKL…WEAQTQKRLR (182 aa)).

Belongs to the SUA5 family. TsaC subfamily.

Its subcellular location is the cytoplasm. It carries out the reaction L-threonine + hydrogencarbonate + ATP = L-threonylcarbamoyladenylate + diphosphate + H2O. Required for the formation of a threonylcarbamoyl group on adenosine at position 37 (t(6)A37) in tRNAs that read codons beginning with adenine. Catalyzes the conversion of L-threonine, HCO(3)(-)/CO(2) and ATP to give threonylcarbamoyl-AMP (TC-AMP) as the acyladenylate intermediate, with the release of diphosphate. This Hydrogenovibrio crunogenus (strain DSM 25203 / XCL-2) (Thiomicrospira crunogena) protein is Threonylcarbamoyl-AMP synthase.